Consider the following 310-residue polypeptide: Aspartate carbamoyltransferase catalytic subunit (310 aa).

Residues arginine 59 and threonine 60 each coordinate carbamoyl phosphate. Residue lysine 87 coordinates L-aspartate. Carbamoyl phosphate-binding residues include arginine 109, histidine 137, and glutamine 140. Residues arginine 170 and arginine 225 each coordinate L-aspartate. Glycine 266 and proline 267 together coordinate carbamoyl phosphate.

It belongs to the aspartate/ornithine carbamoyltransferase superfamily. ATCase family. As to quaternary structure, heterododecamer (2C3:3R2) of six catalytic PyrB chains organized as two trimers (C3), and six regulatory PyrI chains organized as three dimers (R2).

It catalyses the reaction carbamoyl phosphate + L-aspartate = N-carbamoyl-L-aspartate + phosphate + H(+). The protein operates within pyrimidine metabolism; UMP biosynthesis via de novo pathway; (S)-dihydroorotate from bicarbonate: step 2/3. Functionally, catalyzes the condensation of carbamoyl phosphate and aspartate to form carbamoyl aspartate and inorganic phosphate, the committed step in the de novo pyrimidine nucleotide biosynthesis pathway. In Pelobacter propionicus (strain DSM 2379 / NBRC 103807 / OttBd1), this protein is Aspartate carbamoyltransferase catalytic subunit.